Here is a 387-residue protein sequence, read N- to C-terminus: 2-deoxystreptamine glucosyltransferase (387 aa).

It belongs to the glycosyltransferase group 1 family.

It carries out the reaction 2-deoxystreptamine + UDP-N-acetyl-alpha-D-glucosamine = 2'-N-acetylparomamine + UDP + H(+). The enzyme catalyses 2-deoxystreptamine + UDP-alpha-D-glucose = 2'-deamino-2'-hydroxyparomamine + UDP + H(+). It participates in antibiotic biosynthesis; kanamycin biosynthesis. Its function is as follows. Glycosyltransferase involved in the biosynthesis of kanamycin by mediating conversion of 2-deoxystreptamine (2-DOS) to 2'-N-acetylparomamine using UDP-alpha-D-glucose as sugar donor. Can also accept UDP-alpha-D-glucosamine, but with a much lower activity compared to UDP-alpha-D-glucose. The protein is 2-deoxystreptamine glucosyltransferase (kanF) of Streptomyces kanamyceticus.